The chain runs to 233 residues: Small ribosomal subunit protein uS3 (233 aa).

Residues 39-108 enclose the KH type-2 domain; sequence IRTALFKLLK…KLIVNVRVIE (70 aa).

Belongs to the universal ribosomal protein uS3 family. In terms of assembly, part of the 30S ribosomal subunit. Forms a tight complex with proteins S10 and S14.

Binds the lower part of the 30S subunit head. Binds mRNA in the 70S ribosome, positioning it for translation. The polypeptide is Small ribosomal subunit protein uS3 (Mycoplasma mycoides subsp. mycoides SC (strain CCUG 32753 / NCTC 10114 / PG1)).